The sequence spans 166 residues: Chorion protein S18 (166 aa).

The signal sequence occupies residues 1–17 (MMKFMCLFVCAIAAVSA).

This sequence belongs to the chorion protein S15/S18 family.

The protein resides in the secreted. Chorion membrane (egg shell) protein; plays a role in protecting the egg from the environment. The polypeptide is Chorion protein S18 (Cp18) (Drosophila grimshawi (Hawaiian fruit fly)).